Consider the following 149-residue polypeptide: Calmodulin (149 aa).

At alanine 2 the chain carries N-acetylalanine. EF-hand domains follow at residues 8 to 43, 44 to 79, 81 to 116, and 117 to 149; these read EQIA…VGQN, PTEA…KMKD, DSEE…LGEK, and LTDE…MMSK. Residues aspartate 21, aspartate 23, aspartate 25, threonine 27, glutamate 32, aspartate 57, aspartate 59, asparagine 61, threonine 63, glutamate 68, aspartate 94, aspartate 96, asparagine 98, glutamate 105, aspartate 130, aspartate 132, aspartate 134, glutamine 136, and glutamate 141 each contribute to the Ca(2+) site.

It belongs to the calmodulin family.

In terms of biological role, calmodulin mediates the control of a large number of enzymes, ion channels and other proteins by Ca(2+). Among the enzymes to be stimulated by the calmodulin-Ca(2+) complex are a number of protein kinases and phosphatases. This Achlya klebsiana protein is Calmodulin (CMD1).